The sequence spans 434 residues: Histidinol dehydrogenase (434 aa).

The NAD(+) site is built by Tyr130, Gln188, and Asn211. Residues Ser237, Gln259, and His262 each contribute to the substrate site. Residues Gln259 and His262 each contribute to the Zn(2+) site. Active-site proton acceptor residues include Glu326 and His327. Residues His327, Asp360, Glu414, and His419 each coordinate substrate. Zn(2+) is bound at residue Asp360. Position 419 (His419) interacts with Zn(2+).

Belongs to the histidinol dehydrogenase family. In terms of assembly, homodimer. Requires Zn(2+) as cofactor.

The enzyme catalyses L-histidinol + 2 NAD(+) + H2O = L-histidine + 2 NADH + 3 H(+). It participates in amino-acid biosynthesis; L-histidine biosynthesis; L-histidine from 5-phospho-alpha-D-ribose 1-diphosphate: step 9/9. Its function is as follows. Catalyzes the sequential NAD-dependent oxidations of L-histidinol to L-histidinaldehyde and then to L-histidine. The chain is Histidinol dehydrogenase from Salmonella paratyphi A (strain ATCC 9150 / SARB42).